Consider the following 420-residue polypeptide: Glucose-1-phosphate adenylyltransferase (420 aa).

Residues Tyr107, Gly172, Glu187 to Lys188, and Ser205 each bind alpha-D-glucose 1-phosphate.

The protein belongs to the bacterial/plant glucose-1-phosphate adenylyltransferase family. In terms of assembly, homotetramer.

It carries out the reaction alpha-D-glucose 1-phosphate + ATP + H(+) = ADP-alpha-D-glucose + diphosphate. The protein operates within glycan biosynthesis; glycogen biosynthesis. Its function is as follows. Involved in the biosynthesis of ADP-glucose, a building block required for the elongation reactions to produce glycogen. Catalyzes the reaction between ATP and alpha-D-glucose 1-phosphate (G1P) to produce pyrophosphate and ADP-Glc. This is Glucose-1-phosphate adenylyltransferase from Agrobacterium fabrum (strain C58 / ATCC 33970) (Agrobacterium tumefaciens (strain C58)).